A 330-amino-acid polypeptide reads, in one-letter code: Ketol-acid reductoisomerase (NADP(+)) (330 aa).

One can recognise a KARI N-terminal Rossmann domain in the interval 3–184; it reads LSVYYDKDID…GGGRMGVLET (182 aa). NADP(+) is bound by residues 26 to 29, Ser52, and Ser54; that span reads YGTQ. His109 is an active-site residue. Gly135 serves as a coordination point for NADP(+). Positions 185–329 constitute a KARI C-terminal knotted domain; it reads SFKEECESDL…EILRTPFNHE (145 aa). The Mg(2+) site is built by Asp193, Glu197, Glu229, and Glu233. Ser254 contributes to the substrate binding site.

This sequence belongs to the ketol-acid reductoisomerase family. The cofactor is Mg(2+).

It catalyses the reaction (2R)-2,3-dihydroxy-3-methylbutanoate + NADP(+) = (2S)-2-acetolactate + NADPH + H(+). It carries out the reaction (2R,3R)-2,3-dihydroxy-3-methylpentanoate + NADP(+) = (S)-2-ethyl-2-hydroxy-3-oxobutanoate + NADPH + H(+). It participates in amino-acid biosynthesis; L-isoleucine biosynthesis; L-isoleucine from 2-oxobutanoate: step 2/4. It functions in the pathway amino-acid biosynthesis; L-valine biosynthesis; L-valine from pyruvate: step 2/4. Its function is as follows. Involved in the biosynthesis of branched-chain amino acids (BCAA). Catalyzes an alkyl-migration followed by a ketol-acid reduction of (S)-2-acetolactate (S2AL) to yield (R)-2,3-dihydroxy-isovalerate. In the isomerase reaction, S2AL is rearranged via a Mg-dependent methyl migration to produce 3-hydroxy-3-methyl-2-ketobutyrate (HMKB). In the reductase reaction, this 2-ketoacid undergoes a metal-dependent reduction by NADPH to yield (R)-2,3-dihydroxy-isovalerate. The polypeptide is Ketol-acid reductoisomerase (NADP(+)) (Helicobacter acinonychis (strain Sheeba)).